Reading from the N-terminus, the 113-residue chain is MKKKYRYLEDSKNYTSTLYSLLVDNVDKPGYSDICDVLLQVSKKLDNTQSVEALINRLVNYIRITASTYKIIFSKKEEELIIKLGVIGQKAGLNGQYMADFSDKSQFYSVFDQ.

Belongs to the immunity protein EntA family.

Functionally, imparts immunity to mesentericin-Y105 to naturally sensitive host strains. This chain is Probable mesentericin-Y105 immunity protein (mesI), found in Leuconostoc mesenteroides.